The chain runs to 158 residues: 2-C-methyl-D-erythritol 2,4-cyclodiphosphate synthase (158 aa).

A divalent metal cation is bound by residues D9 and H11. Residues 9 to 11 and 35 to 36 contribute to the 4-CDP-2-C-methyl-D-erythritol 2-phosphate site; these read DVH and HS. Residue H43 coordinates a divalent metal cation. Residues 57–59, 62–66, 101–107, 133–136, F140, and R143 contribute to the 4-CDP-2-C-methyl-D-erythritol 2-phosphate site; these read DIG, FPDTD, AQAPKMA, and TTTE.

Belongs to the IspF family. As to quaternary structure, homotrimer. Requires a divalent metal cation as cofactor.

The enzyme catalyses 4-CDP-2-C-methyl-D-erythritol 2-phosphate = 2-C-methyl-D-erythritol 2,4-cyclic diphosphate + CMP. It participates in isoprenoid biosynthesis; isopentenyl diphosphate biosynthesis via DXP pathway; isopentenyl diphosphate from 1-deoxy-D-xylulose 5-phosphate: step 4/6. Involved in the biosynthesis of isopentenyl diphosphate (IPP) and dimethylallyl diphosphate (DMAPP), two major building blocks of isoprenoid compounds. Catalyzes the conversion of 4-diphosphocytidyl-2-C-methyl-D-erythritol 2-phosphate (CDP-ME2P) to 2-C-methyl-D-erythritol 2,4-cyclodiphosphate (ME-CPP) with a corresponding release of cytidine 5-monophosphate (CMP). This chain is 2-C-methyl-D-erythritol 2,4-cyclodiphosphate synthase, found in Vibrio vulnificus (strain YJ016).